The sequence spans 135 residues: Small ribosomal subunit protein uS8 (135 aa).

Belongs to the universal ribosomal protein uS8 family. As to quaternary structure, part of the 30S ribosomal subunit. Contacts proteins S5 and S12.

Functionally, one of the primary rRNA binding proteins, it binds directly to 16S rRNA central domain where it helps coordinate assembly of the platform of the 30S subunit. This is Small ribosomal subunit protein uS8 from Nocardioides sp. (strain ATCC BAA-499 / JS614).